A 77-amino-acid chain; its full sequence is uncharacterized protein (77 aa).

The chain crosses the membrane as a helical span at residues 49–71 (LVIASLILAIILLGILYYISYQM).

The protein resides in the membrane. This is an uncharacterized protein from Archaeoglobus fulgidus (strain ATCC 49558 / DSM 4304 / JCM 9628 / NBRC 100126 / VC-16).